A 534-amino-acid chain; its full sequence is NAD(P)H-quinone oxidoreductase chain 4 (534 aa).

14 helical membrane-spanning segments follow: residues 12–32 (FPWL…IPFF), 44–64 (FALS…INGF), 96–116 (MPLI…AWPV), 120–140 (PKLF…VFAV), 144–164 (LLFF…LAIW), 176–196 (FIIY…AMGF), 220–240 (ILCY…VPLH), 251–271 (TAPV…YALL), 285–305 (FAPL…LTSF), 314–334 (IAYS…SFSS), 340–360 (AMLQ…LVGA), 384–404 (FALW…SGFV), 425–445 (VVMA…LLSM), and 472–492 (VYII…PRLV).

It belongs to the complex I subunit 4 family.

Its subcellular location is the cellular thylakoid membrane. It catalyses the reaction a plastoquinone + NADH + (n+1) H(+)(in) = a plastoquinol + NAD(+) + n H(+)(out). The catalysed reaction is a plastoquinone + NADPH + (n+1) H(+)(in) = a plastoquinol + NADP(+) + n H(+)(out). Its function is as follows. NDH-1 shuttles electrons from NAD(P)H, via FMN and iron-sulfur (Fe-S) centers, to quinones in the respiratory chain. The immediate electron acceptor for the enzyme in this species is believed to be plastoquinone. Couples the redox reaction to proton translocation (for every two electrons transferred, four hydrogen ions are translocated across the cytoplasmic membrane), and thus conserves the redox energy in a proton gradient. This is NAD(P)H-quinone oxidoreductase chain 4 from Prochlorococcus marinus (strain AS9601).